Here is a 593-residue protein sequence, read N- to C-terminus: 2-succinyl-5-enolpyruvyl-6-hydroxy-3-cyclohexene-1-carboxylate synthase (593 aa).

The protein belongs to the TPP enzyme family. MenD subfamily. Homodimer. Requires Mg(2+) as cofactor. Mn(2+) is required as a cofactor. It depends on thiamine diphosphate as a cofactor.

The catalysed reaction is isochorismate + 2-oxoglutarate + H(+) = 5-enolpyruvoyl-6-hydroxy-2-succinyl-cyclohex-3-ene-1-carboxylate + CO2. The protein operates within quinol/quinone metabolism; 1,4-dihydroxy-2-naphthoate biosynthesis; 1,4-dihydroxy-2-naphthoate from chorismate: step 2/7. Its pathway is quinol/quinone metabolism; menaquinone biosynthesis. Catalyzes the thiamine diphosphate-dependent decarboxylation of 2-oxoglutarate and the subsequent addition of the resulting succinic semialdehyde-thiamine pyrophosphate anion to isochorismate to yield 2-succinyl-5-enolpyruvyl-6-hydroxy-3-cyclohexene-1-carboxylate (SEPHCHC). In Pelodictyon phaeoclathratiforme (strain DSM 5477 / BU-1), this protein is 2-succinyl-5-enolpyruvyl-6-hydroxy-3-cyclohexene-1-carboxylate synthase.